Consider the following 147-residue polypeptide: Large ribosomal subunit protein mL40 (147 aa).

A mitochondrion-targeting transit peptide spans 1-26; it reads MLAQTFKKPHRAVLEQVSGTTVFIRN.

Belongs to the mitochondrion-specific ribosomal protein mL40 family. In terms of assembly, component of the mitochondrial large ribosomal subunit (mt-LSU). Mature yeast 74S mitochondrial ribosomes consist of a small (37S) and a large (54S) subunit. The 37S small subunit contains a 15S ribosomal RNA (15S mt-rRNA) and 34 different proteins. The 54S large subunit contains a 21S rRNA (21S mt-rRNA) and 46 different proteins.

It localises to the mitochondrion. Its function is as follows. Component of the mitochondrial ribosome (mitoribosome), a dedicated translation machinery responsible for the synthesis of mitochondrial genome-encoded proteins, including at least some of the essential transmembrane subunits of the mitochondrial respiratory chain. The mitoribosomes are attached to the mitochondrial inner membrane and translation products are cotranslationally integrated into the membrane. The chain is Large ribosomal subunit protein mL40 (MRPL28) from Saccharomyces cerevisiae (strain ATCC 204508 / S288c) (Baker's yeast).